Here is a 401-residue protein sequence, read N- to C-terminus: MFQPSPWRADFPAIAALQRQHQTYLDSAATTQKPQALLDALSHYYGHGAANVHRAQHLPGALATQAFETSRDKVAAWLNAADSRQIVFTHGATSALNLLAYGLEHRLEAGDEIAISALEHHANLLPWQQLAHRRNLHLVVLPLDAHGRIDQDQALQLIGPRTRVLAISQLSNVLGTWQPLPALLAHARAQGALTVVDGAQGVVHGRQDMQQLGCDFYVFSSHKLYGPDGVGVLYGRAQALELLRHWQFGGEMVQLAEYHSASFRPAPLGFEAGTPPIAGVIGLGATLDYLASLDAHAVAAHEASLHQHLLRGLGDREGVRVLGAPQTALASFVIEGVHNADIAHLLTEQGIAVRAGHHCAMPLLKGLGLEGAIRVSLGLYNDSDDVQRFFDALDQGLELLR.

An N6-(pyridoxal phosphate)lysine modification is found at K223.

The protein belongs to the class-V pyridoxal-phosphate-dependent aminotransferase family. Csd subfamily. The cofactor is pyridoxal 5'-phosphate.

It carries out the reaction (sulfur carrier)-H + L-cysteine = (sulfur carrier)-SH + L-alanine. In terms of biological role, catalyzes the removal of elemental sulfur and selenium atoms from L-cysteine, L-cystine, L-selenocysteine, and L-selenocystine to produce L-alanine. The chain is Probable cysteine desulfurase (csdA) from Pseudomonas putida (strain ATCC 47054 / DSM 6125 / CFBP 8728 / NCIMB 11950 / KT2440).